A 149-amino-acid polypeptide reads, in one-letter code: NADH-quinone oxidoreductase subunit A (149 aa).

3 consecutive transmembrane segments (helical) span residues 16 to 36, 68 to 88, and 98 to 118; these read FAVF…GAFF, FYLV…LYAW, and LGFI…FYLV.

Belongs to the complex I subunit 3 family. NDH-1 is composed of 13 different subunits. Subunits NuoA, H, J, K, L, M, N constitute the membrane sector of the complex.

It is found in the cell inner membrane. It carries out the reaction a quinone + NADH + 5 H(+)(in) = a quinol + NAD(+) + 4 H(+)(out). Functionally, NDH-1 shuttles electrons from NADH, via FMN and iron-sulfur (Fe-S) centers, to quinones in the respiratory chain. The immediate electron acceptor for the enzyme in this species is believed to be ubiquinone. Couples the redox reaction to proton translocation (for every two electrons transferred, four hydrogen ions are translocated across the cytoplasmic membrane), and thus conserves the redox energy in a proton gradient. The protein is NADH-quinone oxidoreductase subunit A of Photorhabdus laumondii subsp. laumondii (strain DSM 15139 / CIP 105565 / TT01) (Photorhabdus luminescens subsp. laumondii).